We begin with the raw amino-acid sequence, 286 residues long: Polyamine aminopropyltransferase (286 aa).

The PABS domain maps to 5–238; sequence PLWHETLHDH…GIMTFAWASD (234 aa). Position 33 (glutamine 33) interacts with S-methyl-5'-thioadenosine. Spermidine contacts are provided by histidine 64 and aspartate 88. S-methyl-5'-thioadenosine is bound by residues glutamate 108 and 140–141; that span reads DG. Aspartate 158 acts as the Proton acceptor in catalysis. A spermidine-binding site is contributed by 158–161; sequence DCTD. Residue proline 165 coordinates S-methyl-5'-thioadenosine.

This sequence belongs to the spermidine/spermine synthase family. As to quaternary structure, homodimer or homotetramer.

It is found in the cytoplasm. The enzyme catalyses S-adenosyl 3-(methylsulfanyl)propylamine + putrescine = S-methyl-5'-thioadenosine + spermidine + H(+). The protein operates within amine and polyamine biosynthesis; spermidine biosynthesis; spermidine from putrescine: step 1/1. In terms of biological role, catalyzes the irreversible transfer of a propylamine group from the amino donor S-adenosylmethioninamine (decarboxy-AdoMet) to putrescine (1,4-diaminobutane) to yield spermidine. The sequence is that of Polyamine aminopropyltransferase from Klebsiella pneumoniae subsp. pneumoniae (strain ATCC 700721 / MGH 78578).